Here is a 269-residue protein sequence, read N- to C-terminus: Small ribosomal subunit protein uS3m (269 aa).

This sequence belongs to the universal ribosomal protein uS3 family.

It localises to the mitochondrion. Essential for mitochondrial protein synthesis and required for the maturation of small ribosomal subunits. In Monosporozyma servazzii (Yeast), this protein is Small ribosomal subunit protein uS3m (VAR1).